Consider the following 144-residue polypeptide: Large ribosomal subunit protein uL15 (144 aa).

A compositionally biased stretch (basic residues) spans 1–16 (MVVRKEKKSRKYRGYR). Residues 1–35 (MVVRKEKKSRKYRGYRTHGWGTKGQHRDRGAQGGR) are disordered.

Belongs to the universal ribosomal protein uL15 family. As to quaternary structure, part of the 50S ribosomal subunit.

Functionally, binds to the 23S rRNA. This chain is Large ribosomal subunit protein uL15, found in Sulfolobus acidocaldarius (strain ATCC 33909 / DSM 639 / JCM 8929 / NBRC 15157 / NCIMB 11770).